The primary structure comprises 392 residues: Chalcone synthase-like protein 1 (392 aa).

Cys-166 is an active-site residue.

It belongs to the thiolase-like superfamily. Chalcone/stilbene synthases family. In terms of tissue distribution, expressed at the same level in leaves and in glandular trichomes.

The protein resides in the cytoplasm. Functionally, chalcone synthase that may use malonyl-CoA and hexanoyl-CoA as substrates but without producing olivetol or olivetolic acid. This chain is Chalcone synthase-like protein 1 (CAN383), found in Cannabis sativa (Hemp).